The primary structure comprises 376 residues: Thymidine kinase (376 aa).

Residues 1 to 39 (MASYPCHQHASAFDQAARSRGHSNRRTALRPRRQQEATE) form a disordered region. Basic residues predominate over residues 19–32 (SRGHSNRRTALRPR). Residue 56 to 63 (GPHGMGKT) participates in ATP binding. The active-site Proton acceptor is glutamate 83. Substrate-binding residues include tyrosine 101 and glutamine 125. Arginine 216 provides a ligand contact to ATP. Substrate is bound at residue arginine 222.

It belongs to the herpesviridae thymidine kinase family. As to quaternary structure, homodimer.

It catalyses the reaction thymidine + ATP = dTMP + ADP + H(+). In terms of biological role, catalyzes the transfer of the gamma-phospho group of ATP to thymidine to generate dTMP in the salvage pathway of pyrimidine synthesis. The dTMP serves as a substrate for DNA polymerase during viral DNA replication. Allows the virus to be reactivated and to grow in non-proliferative cells lacking a high concentration of phosphorylated nucleic acid precursors. The protein is Thymidine kinase of Human herpesvirus 1 (strain CL101) (HHV-1).